The sequence spans 227 residues: GRF-interacting factor 1 (227 aa).

Residues arginine 186 to serine 227 are disordered.

This sequence belongs to the SS18 family. Interacts with several GRFs. Interacts with GRF10. Interacts with GRF1. As to expression, expressed in shoots, aerial roots, ears and tassels. Expressed in the shoot apical meristem (SAM), young leaf primordia, leaf margins, inflorescence meristem, floral meristem and spikelet meristem.

In terms of biological role, transcription coactivator that plays a role in the regulation of meristematic function in leaves, stems and inflorescences. Regulates shoot architecture and meristem determinacy. Binds to the inflorescence architecture gene UB3 (unbranched3). Regulates the expression of several genes involved in inflorescence architecture. Component of a network formed by the microRNA396 (miRNA396), the GRFs and their interacting factors (GIFs) acting in the regulation of meristem function, at least partially through the control of cell proliferation. Associates with the core SWI/SNF chromatin-remodeling complex and specific GRFs to tightly regulate the transition between cell division and cell expansion in growing leaves. The chain is GRF-interacting factor 1 from Zea mays (Maize).